A 156-amino-acid chain; its full sequence is Small ribosomal subunit protein uS7c (156 aa).

Belongs to the universal ribosomal protein uS7 family. In terms of assembly, part of the 30S ribosomal subunit.

The protein localises to the plastid. The protein resides in the chloroplast. Functionally, one of the primary rRNA binding proteins, it binds directly to 16S rRNA where it nucleates assembly of the head domain of the 30S subunit. The chain is Small ribosomal subunit protein uS7c (rps7) from Chara vulgaris (Common stonewort).